The chain runs to 476 residues: Aspartyl/glutamyl-tRNA(Asn/Gln) amidotransferase subunit B (476 aa).

Belongs to the GatB/GatE family. GatB subfamily. As to quaternary structure, heterotrimer of A, B and C subunits.

The enzyme catalyses L-glutamyl-tRNA(Gln) + L-glutamine + ATP + H2O = L-glutaminyl-tRNA(Gln) + L-glutamate + ADP + phosphate + H(+). It catalyses the reaction L-aspartyl-tRNA(Asn) + L-glutamine + ATP + H2O = L-asparaginyl-tRNA(Asn) + L-glutamate + ADP + phosphate + 2 H(+). In terms of biological role, allows the formation of correctly charged Asn-tRNA(Asn) or Gln-tRNA(Gln) through the transamidation of misacylated Asp-tRNA(Asn) or Glu-tRNA(Gln) in organisms which lack either or both of asparaginyl-tRNA or glutaminyl-tRNA synthetases. The reaction takes place in the presence of glutamine and ATP through an activated phospho-Asp-tRNA(Asn) or phospho-Glu-tRNA(Gln). This chain is Aspartyl/glutamyl-tRNA(Asn/Gln) amidotransferase subunit B, found in Bacillus velezensis (strain DSM 23117 / BGSC 10A6 / LMG 26770 / FZB42) (Bacillus amyloliquefaciens subsp. plantarum).